The sequence spans 409 residues: Dihydroorotase (409 aa).

2 residues coordinate Zn(2+): H57 and H59. Residues 59-61 and N91 contribute to the substrate site; that span reads HLR. Positions 139, 168, 208, and 276 each coordinate Zn(2+). At K139 the chain carries N6-carboxylysine. D276 is an active-site residue. Residues H280 and 290-291 contribute to the substrate site; that span reads AG.

The protein belongs to the metallo-dependent hydrolases superfamily. DHOase family. Class I DHOase subfamily. It depends on Zn(2+) as a cofactor.

It carries out the reaction (S)-dihydroorotate + H2O = N-carbamoyl-L-aspartate + H(+). The protein operates within pyrimidine metabolism; UMP biosynthesis via de novo pathway; (S)-dihydroorotate from bicarbonate: step 3/3. In terms of biological role, catalyzes the reversible cyclization of carbamoyl aspartate to dihydroorotate. This Thermococcus kodakarensis (strain ATCC BAA-918 / JCM 12380 / KOD1) (Pyrococcus kodakaraensis (strain KOD1)) protein is Dihydroorotase.